The primary structure comprises 185 residues: Ribosome-recycling factor (185 aa).

Belongs to the RRF family.

It is found in the cytoplasm. Its function is as follows. Responsible for the release of ribosomes from messenger RNA at the termination of protein biosynthesis. May increase the efficiency of translation by recycling ribosomes from one round of translation to another. The sequence is that of Ribosome-recycling factor from Streptococcus pneumoniae (strain 70585).